The sequence spans 252 residues: Imidazole glycerol phosphate synthase subunit HisF (252 aa).

Catalysis depends on residues Asp11 and Asp130.

This sequence belongs to the HisA/HisF family. As to quaternary structure, heterodimer of HisH and HisF.

Its subcellular location is the cytoplasm. It carries out the reaction 5-[(5-phospho-1-deoxy-D-ribulos-1-ylimino)methylamino]-1-(5-phospho-beta-D-ribosyl)imidazole-4-carboxamide + L-glutamine = D-erythro-1-(imidazol-4-yl)glycerol 3-phosphate + 5-amino-1-(5-phospho-beta-D-ribosyl)imidazole-4-carboxamide + L-glutamate + H(+). The protein operates within amino-acid biosynthesis; L-histidine biosynthesis; L-histidine from 5-phospho-alpha-D-ribose 1-diphosphate: step 5/9. IGPS catalyzes the conversion of PRFAR and glutamine to IGP, AICAR and glutamate. The HisF subunit catalyzes the cyclization activity that produces IGP and AICAR from PRFAR using the ammonia provided by the HisH subunit. The sequence is that of Imidazole glycerol phosphate synthase subunit HisF from Lactiplantibacillus plantarum (strain ATCC BAA-793 / NCIMB 8826 / WCFS1) (Lactobacillus plantarum).